Reading from the N-terminus, the 390-residue chain is Mannitol-1-phosphate 5-dehydrogenase (390 aa).

3-14 (ALHFGAGNIGRG) is a binding site for NAD(+).

Belongs to the mannitol dehydrogenase family.

It catalyses the reaction D-mannitol 1-phosphate + NAD(+) = beta-D-fructose 6-phosphate + NADH + H(+). The protein is Mannitol-1-phosphate 5-dehydrogenase of Buchnera aphidicola subsp. Baizongia pistaciae (strain Bp).